The sequence spans 109 residues: Aquaporin-2 (109 aa).

At 1-6 the chain is on the cytoplasmic side; that stretch reads SIAFSR. The chain crosses the membrane as a helical span at residues 7-27; that stretch reads AVFSEFLATLLFVFFGLGSAL. Residues 28–35 lie on the Extracellular side of the membrane; that stretch reads NWPQALPS. Residues 36–54 traverse the membrane as a helical segment; that stretch reads VLQIAMAFGLAIGTLVQTL. The Cytoplasmic segment spans residues 55–59; that stretch reads GHISG. The segment at residues 60-69 is an intramembrane region (discontinuously helical); it reads AHINPAVTVA. Positions 63–65 match the NPA 1 motif; sequence NPA. The Cytoplasmic segment spans residues 70–80; that stretch reads CLVGCHVSFLR. The helical transmembrane segment at 81 to 102 threads the bilayer; the sequence is ATFYLAAQLLGAVAGAALLHEL. Over 103-109 the chain is Extracellular; that stretch reads TPPDIRG.

This sequence belongs to the MIP/aquaporin (TC 1.A.8) family. In terms of assembly, homotetramer. Serine phosphorylation is necessary and sufficient for expression at the apical membrane. Endocytosis is not phosphorylation-dependent. In terms of processing, N-glycosylated.

It is found in the apical cell membrane. The protein localises to the basolateral cell membrane. Its subcellular location is the cell membrane. It localises to the cytoplasmic vesicle membrane. The protein resides in the golgi apparatus. It is found in the trans-Golgi network membrane. It catalyses the reaction H2O(in) = H2O(out). It carries out the reaction glycerol(in) = glycerol(out). Functionally, forms a water-specific channel that provides the plasma membranes of renal collecting duct with high permeability to water, thereby permitting water to move in the direction of an osmotic gradient. Plays an essential role in renal water homeostasis. Could also be permeable to glycerol. This chain is Aquaporin-2, found in Elephas maximus (Indian elephant).